A 363-amino-acid polypeptide reads, in one-letter code: MAP kinase kinase mkk-4 (363 aa).

The disordered stretch occupies residues 1-38; that stretch reads MVQEDDENLRNSMSLRPTSLSTRPTSLSVNGNEKTLPE. Over residues 14–28 the composition is skewed to low complexity; the sequence is SLRPTSLSTRPTSLS. Positions 66–330 constitute a Protein kinase domain; the sequence is LQDLGAIGNG…YDTLKSFDFY (265 aa). Residues 72–80 and lysine 95 each bind ATP; that span reads IGNGNFGTV. Catalysis depends on aspartate 194, which acts as the Proton acceptor.

Belongs to the protein kinase superfamily. STE Ser/Thr protein kinase family. MAP kinase kinase subfamily. Expressed in the pharynx, including the corpus, isthmus and terminal bulb.

The protein resides in the cytoplasm. The enzyme catalyses L-seryl-[protein] + ATP = O-phospho-L-seryl-[protein] + ADP + H(+). It carries out the reaction L-threonyl-[protein] + ATP = O-phospho-L-threonyl-[protein] + ADP + H(+). The catalysed reaction is L-tyrosyl-[protein] + ATP = O-phospho-L-tyrosyl-[protein] + ADP + H(+). In terms of biological role, activity is required in presynaptic neurons, in a dose-dependent manner, for normal presynaptic development and morphology. Plays a role in the formation of muscle connections, also called muscle arm extensions, between the body wall and the motor axons in the dorsal and ventral cord. This chain is MAP kinase kinase mkk-4 (mkk-4), found in Caenorhabditis elegans.